The chain runs to 997 residues: Serine-repeat antigen protein 5 (997 aa).

A signal peptide spans 1–22 (MKSYISLFFILCVIFNKNVIKC). 2 disordered regions span residues 26–107 (SQTG…EKQD) and 181–252 (LPSN…PRNL). Positions 30-51 (NTGGGQAGNTGGDQAGSTGGSP) are enriched in gly residues. Over residues 52-67 (QGSTGASPQGSTGASP) the composition is skewed to low complexity. The segment covering 68 to 84 (QGSTGASQPGSSEPSNP) has biased composition (polar residues). 3 stretches are compositionally biased toward low complexity: residues 85–103 (VSSG…STSS), 183–196 (SNGT…STGT), and 205–235 (SDSS…SSES). Serine 183 is subject to Phosphoserine. N-linked (GlcNAc...) asparagine glycosylation occurs at asparagine 184. An interaction with PTKL region spans residues 216 to 253 (SSSSSSSSSSSSSSSSSSESLPANGPDSPTVKPPRNLQ). Asparagine 318 carries N-linked (GlcNAc...) asparagine glycosylation. An interaction with host VTN region spans residues 373–390 (YKYLSEDIVSKFKEIKAE). Cysteine 445 and cysteine 497 are oxidised to a cystine. The residue at position 549 (threonine 549) is a Phosphothreonine; by CPK1. Intrachain disulfides connect cysteine 567–cysteine 572, cysteine 581–cysteine 610, cysteine 593–cysteine 636, cysteine 627–cysteine 672, and cysteine 755–cysteine 809. Positions 579 to 997 (NNCISNLQVE…TNNECYFCYV (419 aa)) are thiol-protease-like. Active-site residues include histidine 762 and asparagine 787. Asparagine 828 carries an N-linked (GlcNAc...) asparagine glycan. Residues 843-886 (KASPEFYHNLYFKNFNVGKKNLFSEKEDNENNKKLGNNYIIFGQ) constitute a propeptide, inhibition peptide. Phosphoserine is present on serine 866.

Belongs to the peptidase C1 family. In terms of assembly, may interact (via C-terminus) with PTKL (via SAM domain). Interacts (via C-terminus) with human VTN (via hemopexin repeat 2); may form heterotetramers of two VTN and SERA5 P47 heterodimers; the interaction may protect merozoites from phagocytosis by host monocytes; VTN glycosylation appears to be dispensable for the interaction. As to quaternary structure, monomer. Interacts with kinase CPK1/CDPK1 at the schizont stage. Phosphorylation by CPK1/CDPK1 increases SERA5 protease activity towards a synthetic peptide in vitro. In terms of processing, just prior to merozoite egress from host erythrocytes, proteolytically cleaved into multiple fragments. Cleaved by SUB1 into p47 and p73, p73 is further cleaved by SUB1 into p56 and p18 and p56 is further processed into p50 by an unidentified protease. p47 remains covalently associated with p18 via disulfide bond. p47 can be processed into p25n and p25c by SUB1. p25c and p25n remain associated with p18. Proteolytic processing is essential for merozoite egress from host erythrocytes. The cleavage of the propeptide to produce p50 is necessary for protease activity and to promote merozoite egress.

It localises to the parasitophorous vacuole. The protein localises to the secreted. The protein resides in the cell membrane. In terms of biological role, plays an essential role during the asexual blood stage development by controlling the kinetics of merozoite egress from host erythrocytes. Specifically, prevents premature rupture of the parasitophorous vacuole and host erythrocyte membranes. May prevent merozoite phagocytosis by host monocytes via interaction with host VTN at the merozoite surface. Plays a role in parasite growth. Its function is as follows. Protease activity is controversial. Has been shown in a number of studies to have protease activity towards a synthetic peptide in vitro. Has also been shown to lack protease activity towards a synthetic peptide in vitro. The protein is Serine-repeat antigen protein 5 of Plasmodium falciparum (isolate 3D7).